We begin with the raw amino-acid sequence, 473 residues long: Hyaluronidase-2 (473 aa).

The N-terminal stretch at 1–20 (MRAGLGPIITLALVLEVAWA) is a signal peptide. Disulfide bonds link C47–C340 and C211–C227. Residues N74 and N103 are each glycosylated (N-linked (GlcNAc...) asparagine). Residue E135 is the Proton donor of the active site. N357 carries N-linked (GlcNAc...) asparagine glycosylation. Positions 361 to 439 (ATQYCSWTQC…YLGWGGEQCQ (79 aa)) constitute an EGF-like domain. 3 disulfides stabilise this stretch: C365/C376, C370/C427, and C429/C438. N-linked (GlcNAc...) asparagine glycosylation is present at N390. Residue N448 is the site of GPI-anchor amidated asparagine; alternate attachment. N448 is a glycosylation site (N-linked (GlcNAc...) asparagine; alternate). Residues 449–473 (ASRAWAGSHLTSLLGLVAVALTWTL) constitute a propeptide, removed in mature form.

It belongs to the glycosyl hydrolase 56 family. As to quaternary structure, interacts with MST1R. As to expression, widely expressed, with highest expression levels in kidney, lung and liver (at protein level).

The protein resides in the cell membrane. The catalysed reaction is Random hydrolysis of (1-&gt;4)-linkages between N-acetyl-beta-D-glucosamine and D-glucuronate residues in hyaluronate.. In terms of biological role, catalyzes hyaluronan degradation into small fragments that are endocytosed and degraded in lysosomes by HYAL1 and exoglycosidases. Essential for the breakdown of extracellular matrix hyaluronan. The polypeptide is Hyaluronidase-2 (Hyal2) (Mus musculus (Mouse)).